The following is a 258-amino-acid chain: Spectinomycin 9-adenylyltransferase (258 aa).

The enzyme catalyses spectinomycin + ATP = 9-O-adenylylspectinomycin + diphosphate. Functionally, mediates bacterial resistance to spectinomycin, is probably a spectinomycin 9-adenylyltransferase. In Campylobacter jejuni, this protein is Spectinomycin 9-adenylyltransferase.